We begin with the raw amino-acid sequence, 280 residues long: NLP effector protein Pc553546 (280 aa).

An N-terminal signal peptide occupies residues 1–19; the sequence is MNLVAALVLCFALLSSVRG. The Hepta-peptide GHRHDWE motif signature appears at 123 to 129; that stretch reads AGRHDWA. 2 N-linked (GlcNAc...) asparagine glycosylation sites follow: asparagine 142 and asparagine 209.

The protein belongs to the Necrosis inducing protein (NPP1) family.

It is found in the secreted. Its function is as follows. Secreted effector that contributes strongly to virulence during infection by P.capsici. This is NLP effector protein Pc553546 from Phytophthora capsici.